A 550-amino-acid polypeptide reads, in one-letter code: MSAAWIPALGLGVCLLLLPGPAGSEGAAPIAITCFTRGLDIRKEKADVLCPGGCPLEEFSVYGNIVYASVSSICGAAVHRGVISNSGGPVRVYSLPGRENYSSVDANGIQSQMLSRWSASFTVTKGKSSTQEATGQAVSTAHPPTGKRLKKTPEKKTGNKDCKADIAFLIDGSFNIGQRRFNLQKNFVGKVALMLGIGTEGPHVGLVQASEHPKIEFYLKNFTSAKDVLFAIKEVGFRGGNSNTGKALKHTAQKFFTVDAGVRKGIPKVVVVFIDGWPSDDIEEAGIVAREFGVNVFIVSVAKPIPEELGMVQDVTFVDKAVCRNNGFFSYHMPNWFGTTKYVKPLVQKLCTHEQMMCSKTCYNSVNIAFLIDGSSSVGDSNFRLMLEFVSNIAKTFEISDIGAKIAAVQFTYDQRTEFSFTDYSTKENVLAVIRNIRYMSGGTATGDAISFTVRNVFGPIRESPNKNFLVIVTDGQSYDDVQGPAAAAHDAGITIFSVGVAWAPLDDLKDMASKPKESHAFFTREFTGLEPIVSDVIRGICRDFLESQQ.

The signal sequence occupies residues 1-24 (MSAAWIPALGLGVCLLLLPGPAGS). Positions 28–121 (APIAITCFTR…QMLSRWSASF (94 aa)) constitute an LCCL domain. 2 disulfide bridges follow: cysteine 34-cysteine 50 and cysteine 54-cysteine 74. Asparagine 100 is a glycosylation site (N-linked (GlcNAc...) asparagine). The segment covering 128–139 (SSTQEATGQAVS) has biased composition (polar residues). The tract at residues 128–159 (SSTQEATGQAVSTAHPPTGKRLKKTPEKKTGN) is disordered. VWFA domains are found at residues 165-346 (DIAF…VKPL) and 367-537 (NIAF…VSDV). Asparagine 221 is a glycosylation site (N-linked (GlcNAc...) asparagine).

In terms of assembly, monomer. May form homodimer. Interacts with type II collagen. Interacts with SLC44A2. Interacts with ANXA2. Post-translationally, N-glycosylated. In terms of processing, a 50 kDa form is created by proteolytic cleavage. Expressed in inner ear structures; the cochlea and the vestibule.

The protein resides in the secreted. It is found in the extracellular space. The protein localises to the extracellular matrix. Its function is as follows. Plays a role in the control of cell shape and motility in the trabecular meshwork. The protein is Cochlin (COCH) of Homo sapiens (Human).